A 910-amino-acid polypeptide reads, in one-letter code: MEAKVEEKEPEPVENAGPDAPVRLTPMMEQYIEIKAANVDSLLFYRMGDFYELFFDDAVAASAALGITLTKRGKHLGEDIPMCGVPVHAADDYLQKLIAKGYRVAVCEQVEDPAEAKKRGSKSVVKRDVIRLVTPGTLTEEKLLDPAQANFLMAMGRTRGDGALALAWIDISTGTFRVAETTPDRLFADIMRVDPRELVVADSAFHDEELRPVFDLIGKAVTPQPATLFDSAAAQTRIQHYFNVATLDGFGQFSRPELSAISGAIAYIEKTQISERPPLMRPEREHEGGTLFIDPATRASLELARTMSGNRDGSLLKAIDRTVTGGGARLLAERLTAPLTSPKEIALRLDSVSWCLSEQTLCEALRLELKGVPDMPRALSRLAVGRGGPRDLGALACGFEAAGGIASLLDGALLPDELAAAREAIEKMPAGFAAHLDRALADELPLLKRDGGFVREGYNSELDEMRALRDQSRRVIAGLQADYIEETGIKSLKIKHNNVLGYFIEVTANNSGAMTDTDEAKSRFIHRQTMANAMRFTTTELAELESKIANAADRALSIELAIFEELTAEAVAHADSIRAAASALSVFDVSTALAVLAEEQGYCRPHVDDSLSFNIVAGRHPVVEQALRRQAANPFVANDCDLSPQRDGGDGAIWLLTGPNMGGKSTFLRQNALIAILAQMGSFVPAGSAHIGVVDRLFSRVGASDDLARGRSTFMVEMVETAAILNQAGEHSLVILDEIGRGTATFDGLSIAWAAVEYLHEKNRCRALFATHFHEMTALSEKLERLSNVTMRVKEWDNDVIFLHEVAKGAADRSYGVQVARLAGLPEAVVNRARDVLHQLEAGETSGKADRLIDDLPLFSVMLQQEKPKPQIQAKDSELANAVAAISPDELTPREALDLIYKLKELAGKA.

Over residues 1–11 the composition is skewed to basic and acidic residues; sequence MEAKVEEKEPE. Residues 1–21 are disordered; it reads MEAKVEEKEPEPVENAGPDAP. Residue 658-665 coordinates ATP; sequence GPNMGGKS.

The protein belongs to the DNA mismatch repair MutS family.

This protein is involved in the repair of mismatches in DNA. It is possible that it carries out the mismatch recognition step. This protein has a weak ATPase activity. This chain is DNA mismatch repair protein MutS, found in Brucella melitensis biotype 1 (strain ATCC 23456 / CCUG 17765 / NCTC 10094 / 16M).